The following is a 661-amino-acid chain: Acetyl-coenzyme A synthetase (661 aa).

CoA is bound by residues 197–200 (RGGK) and Thr-320. Residues 396 to 398 (GEP), 420 to 425 (DTWWQT), Asp-511, and Arg-526 contribute to the ATP site. Ser-534 serves as a coordination point for CoA. ATP is bound at residue Arg-537. Mg(2+) contacts are provided by Val-548 and Val-553. Lys-620 carries the post-translational modification N6-acetyllysine.

It belongs to the ATP-dependent AMP-binding enzyme family. It depends on Mg(2+) as a cofactor. Acetylated. Deacetylation by the SIR2-homolog deacetylase activates the enzyme.

The catalysed reaction is acetate + ATP + CoA = acetyl-CoA + AMP + diphosphate. Functionally, catalyzes the conversion of acetate into acetyl-CoA (AcCoA), an essential intermediate at the junction of anabolic and catabolic pathways. AcsA undergoes a two-step reaction. In the first half reaction, AcsA combines acetate with ATP to form acetyl-adenylate (AcAMP) intermediate. In the second half reaction, it can then transfer the acetyl group from AcAMP to the sulfhydryl group of CoA, forming the product AcCoA. In Leptospira interrogans serogroup Icterohaemorrhagiae serovar Lai (strain 56601), this protein is Acetyl-coenzyme A synthetase.